Here is a 692-residue protein sequence, read N- to C-terminus: Methionine--tRNA ligase (692 aa).

The 'HIGH' region motif lies at P12–H22. 4 residues coordinate Zn(2+): C143, C146, C156, and C159. The 'KMSKS' region signature appears at K341 to S345. K344 serves as a coordination point for ATP. The tRNA-binding domain occupies D586–R692.

This sequence belongs to the class-I aminoacyl-tRNA synthetase family. MetG type 1 subfamily. Homodimer. The cofactor is Zn(2+).

Its subcellular location is the cytoplasm. It catalyses the reaction tRNA(Met) + L-methionine + ATP = L-methionyl-tRNA(Met) + AMP + diphosphate. In terms of biological role, is required not only for elongation of protein synthesis but also for the initiation of all mRNA translation through initiator tRNA(fMet) aminoacylation. The sequence is that of Methionine--tRNA ligase from Bordetella bronchiseptica (strain ATCC BAA-588 / NCTC 13252 / RB50) (Alcaligenes bronchisepticus).